We begin with the raw amino-acid sequence, 524 residues long: uncharacterized protein (524 aa).

The chain crosses the membrane as a helical span at residues 13-33 (EFILLILGMTVVGIVITMGLV).

The protein resides in the membrane. This is an uncharacterized protein from Methanocaldococcus jannaschii (strain ATCC 43067 / DSM 2661 / JAL-1 / JCM 10045 / NBRC 100440) (Methanococcus jannaschii).